We begin with the raw amino-acid sequence, 1515 residues long: Neurite extension and migration factor (1515 aa).

Residues 381–405 (DKKKGKEEVHEDKSIETKDEKDNGE) show a composition bias toward basic and acidic residues. 6 disordered regions span residues 381-415 (DKKK…KPCG), 505-529 (VNER…PKKR), 731-774 (KKIK…HMSE), 1158-1225 (FDEP…TKKG), 1372-1422 (TPQE…EDSR), and 1435-1479 (TLGN…AGTT). Polar residues-rich tracts occupy residues 746–757 (SPVSEDTSSKAN) and 763–772 (TPGTSNSSHM). The span at 1180-1193 (PGKSGAVSQSSSQK) shows a compositional bias: low complexity. Basic residues predominate over residues 1442–1452 (THKKLYRHKSS). Basic and acidic residues predominate over residues 1455 to 1479 (GLRDEKYKGKRVEREQAHKDEAGTT).

In terms of tissue distribution, expressed in the brain, particularly during the late embryonic and perinatal stages of development. In the developing brain, it is expressed only in the cortical plate and subplate region but not in the intermediate or ventricular zone.

It is found in the nucleus. It localises to the cytoplasm. In terms of biological role, involved in neurite outgrowth by regulating cell-cell adhesion via the N-cadherin signaling pathway. May act by regulating expression of protein-coding genes, such as N-cadherins and integrin beta-1 (ITGB1). This chain is Neurite extension and migration factor, found in Mus musculus (Mouse).